A 349-amino-acid polypeptide reads, in one-letter code: Trans-enoyl reductase phmE (349 aa).

55-58 (CDWK) is an NADP(+) binding site. 143 to 150 (TGIGTMGL) contacts substrate. NADP(+) is bound by residues 182–185 (SPKN), tyrosine 200, and 247–248 (LE). 267–271 (GMAIL) is a binding site for substrate. 336-337 (VS) contributes to the NADP(+) binding site.

Belongs to the zinc-containing alcohol dehydrogenase family. As to quaternary structure, monomer.

It functions in the pathway mycotoxin biosynthesis. In terms of biological role, trans-enoyl reductase; part of the gene cluster that mediates the biosynthesis of the mycotoxins phomacins, leucine-derived cytochalasans with potent actin polymerization-inhibitory activities and monocot-specific antigerminative activities. The first step in the pathway is catalyzed by the hybrid PKS-NRPS phmA, assisted by the enoyl reductase phmE, that are responsible for fusion of the leucine precursor and the polyketide backbone to produce a 2-pyrrolidone intermediate. The polyketide synthase module (PKS) of phmA is responsible for the synthesis of the polyketide backbone and the downstream nonribosomal peptide synthetase (NRPS) amidates the carboxyl end of the polyketide with the leucine precursor. Because phmA lacks a designated enoylreductase (ER) domain, the required activity is provided the enoyl reductase phmE. Reduction by the hydrolyase phmG, followed by dehydration and intra-molecular Diels-Alder cyclization by the Diels-Alderase phmD then yield the required isoindolone-fused macrocycle. A number of oxidative steps catalyzed by the tailoring cytochrome P450 monooxygenase phmB, the FAD-linked oxidoreductase phmC and the short-chain dehydrogenase/reductase phmF, are further required to afford the final products, phomacin D and phomacin E. The chain is Trans-enoyl reductase phmE from Phaeosphaeria nodorum (strain SN15 / ATCC MYA-4574 / FGSC 10173) (Glume blotch fungus).